The primary structure comprises 328 residues: MKQPVRVAVTGAAGQIGYSLLFRIASGEMLGKDQPVILQLLEVPVEKAQQALKGVMMELDDCAFPLLAGMIGTDDPKVAFKDADYALLVGSRPRGPGMERADLLKVNGEIFIGQGQALNEVASRDVKVLVVGNPANTNAYIAMKSAPDLPAKNFTAMLRLDHNRALTQVAQKAGVAVADIEKLTVWGNHSPTMYADYRFATANGESLKDKINDPAWNKDVFLPTVGKRGAAIIEARGLSSAASAANAAIDHMRDWALGTNGKWVTMGVPSDGSYGIPEGVMFGFPVTTENGEYKIVQGLEIDEFSRERINFTLNELEEERAAIADMVK.

An NAD(+)-binding site is contributed by 11–17 (GAAGQIG). Arg94 and Arg100 together coordinate substrate. Residues Asn107, Gln114, and 131–133 (VGN) each bind NAD(+). Positions 133 and 164 each coordinate substrate. Residue His189 is the Proton acceptor of the active site.

It belongs to the LDH/MDH superfamily. MDH type 2 family.

It catalyses the reaction (S)-malate + NAD(+) = oxaloacetate + NADH + H(+). Catalyzes the reversible oxidation of malate to oxaloacetate. The sequence is that of Malate dehydrogenase from Acinetobacter baumannii (strain AB0057).